The primary structure comprises 402 residues: UPF0261 protein y4oU (402 aa).

Belongs to the UPF0261 family.

This Sinorhizobium fredii (strain NBRC 101917 / NGR234) protein is UPF0261 protein y4oU.